A 330-amino-acid polypeptide reads, in one-letter code: RNA polymerase sigma factor RpoS (330 aa).

The segment at 56-89 (DATQLYLGEIGYSPLLTAEEEVYFARRALRGDVA) is sigma-70 factor domain-1. The tract at residues 94–164 (MIESNLRLVV…ERAIMNQTRT (71 aa)) is sigma-70 factor domain-2. Residues 118–121 (DLIE) carry the Interaction with polymerase core subunit RpoC motif. Residues 174–249 (ELNVYLRTAR…DEKENGPEDT (76 aa)) form a sigma-70 factor domain-3 region. The sigma-70 factor domain-4 stretch occupies residues 262-315 (WLFELNAKQREVLARRFGLLGYEAATLEDVGREIGLTRERVRQIQVEGLRRLRE). A DNA-binding region (H-T-H motif) is located at residues 288-307 (LEDVGREIGLTRERVRQIQV).

Belongs to the sigma-70 factor family. RpoS subfamily. In terms of assembly, interacts with the RNA polymerase core enzyme and RssB.

Its subcellular location is the cytoplasm. Its function is as follows. Sigma factors are initiation factors that promote the attachment of RNA polymerase to specific initiation sites and are then released. This sigma factor is the master transcriptional regulator of the stationary phase and the general stress response. Controls, positively or negatively, the expression of several hundred genes, which are mainly involved in metabolism, transport, regulation and stress management. Protects stationary phase cells from killing induced by endoribonuclease MazF. The polypeptide is RNA polymerase sigma factor RpoS (Escherichia coli (strain K12)).